Consider the following 2285-residue polypeptide: AT-rich interactive domain-containing protein 1A (2285 aa).

The span at 1-14 (MAAQVAPAAASSLG) shows a compositional bias: low complexity. Disordered stretches follow at residues 1–820 (MAAQ…ALPN) and 978–1005 (ATKMNNKADGTPKTESKSKKSSSSTTTN). A2 is modified (N-acetylalanine). Basic and acidic residues predominate over residues 23 to 35 (ELKKAEQQQREEA). 2 positions are modified to phosphoserine: S58 and S79. Gly residues-rich tracts occupy residues 79–95 (SNGGGGGGGAGSGGGPG) and 121–130 (PGGGGGGSSD). Low complexity-rich tracts occupy residues 131-142 (GVGAPPHSAAAA), 212-221 (YNSYYPNRSA), and 228-265 (AYALSSPRGGTPGSGAAAAAGSKPPPSSSASASSSSSS). S233 carries the phosphoserine modification. Residues 273-286 (AMGGGGPSAAGGGT) are compositionally biased toward gly residues. Position 286 is a phosphothreonine (T286). An LXXLL motif is present at residues 295-299 (LNQLL). Residues 295–306 (LNQLLTSPSSAR) show a composition bias toward polar residues. At S301 the chain carries Phosphoserine. The span at 310-327 (GYPGGDYSGGPQDGGAGK) shows a compositional bias: gly residues. Low complexity predominate over residues 338–353 (GAAAAAAAAAAASGGA). Phosphoserine occurs at positions 363 and 382. A compositionally biased stretch (low complexity) spans 400–425 (PYSQQQGPPSGPQQGHGYPGQPYGSQ). R429 is subject to Asymmetric dimethylarginine. Low complexity-rich tracts occupy residues 447–457 (YTQQIPPYGQQ), 465–546 (QGQT…QHPQ), and 553–595 (QPQA…YSQQ). S604 is subject to Phosphoserine. Over residues 610–621 (SQASSAPSMTSS) the composition is skewed to low complexity. Polar residues predominate over residues 628–637 (MNLSLQSRPS). Residues 658 to 674 (SPGVSTSGISSSQGEQS) show a composition bias toward low complexity. Positions 675 to 685 (NPAQSPFSPHT) are enriched in polar residues. Phosphoserine occurs at positions 696, 698, 702, 730, 764, and 772. 2 stretches are compositionally biased toward polar residues: residues 730-747 (SGQSDSIMHPSMNQSSIA) and 755-793 (RNPQMPQYSSPQPGSALSPRQPSGGQIHTGMGSYQQNSM). A compositionally biased stretch (gly residues) spans 797-807 (GPQGGQYGPQG). The span at 808–820 (GYPRQPNYNALPN) shows a compositional bias: low complexity. One can recognise an ARID domain in the interval 1017 to 1108 (EPERKMWVDR…CLYAFECKIE (92 aa)). Disordered regions lie at residues 1113–1483 (PPPD…MMGG) and 1539–1603 (ANHE…SPSK). Positions 1141 to 1154 (MQGPQTPQSTSSSM) are enriched in low complexity. Over residues 1162–1177 (PPTPASTPHSQIPPLP) the composition is skewed to pro residues. S1184 is subject to Phosphoserine. The span at 1194–1219 (GSDSTFQKRNSMTPNPGYQPSMNTSD) shows a compositional bias: polar residues. Position 1235 is a phosphoserine (S1235). R1276 is subject to Omega-N-methylarginine. Polar residues-rich tracts occupy residues 1299–1315 (NMSTGAPQPNLMPSNPD) and 1339–1356 (YGNQFSTQGTPSGSPFPS). The span at 1357–1367 (QQTTMYQQQQQ) shows a compositional bias: low complexity. The Nuclear localization signal motif lies at 1368–1387 (NYKRPMDGTYGPPAKRHEGE). Positions 1396-1425 (GQGQPQQQQLPPAQPQPASQQQAAQPSPQQ) are enriched in low complexity. Residues 1468–1477 (PGTNAQQNMP) are compositionally biased toward polar residues. The segment covering 1554–1577 (PYGPSAPVPPMTRPPPSNYQPPPS) has biased composition (pro residues). S1604 is subject to Phosphoserine. Position 1612 is an N6-acetyllysine (K1612). Residues 1709 to 1713 (LPGLL) carry the LXXLL motif. Disordered regions lie at residues 1747–1774 (PGRFSKVSSPAPMEGGEEEEELLGPKLE) and 1859–1907 (FESK…EKRI). Phosphoserine occurs at positions 1751 and 1754. The segment covering 1761–1774 (GGEEEEELLGPKLE) has biased composition (acidic residues). Positions 1886–1895 (EGTPGTTDQE) are enriched in low complexity. T1888 is modified (phosphothreonine). K1905 carries the N6-acetyllysine modification. 2 positions are modified to phosphoserine: S1929 and S1944. Short sequence motifs (LXXLL) lie at residues 1967–1971 (LCTLL) and 2085–2089 (LDGLL).

As to quaternary structure, component of SWI/SNF chromatin remodeling complexes, in some of which it can be mutually exclusive with ARID1B/BAF250B. The canonical complex contains a catalytic subunit (either SMARCA4/BRG1/BAF190A or SMARCA2/BRM/BAF190B) and at least SMARCE1, ACTL6A/BAF53, SMARCC1/BAF155, SMARCC2/BAF170, and SMARCB1/SNF5/BAF47. Other subunits specific to each of the complexes may also be present permitting several possible combinations developmentally and tissue specific. Component of the BAF (SWI/SNF-A) complex, which includes at least actin (ACTB), ARID1A/BAF250A, ARID1B/BAF250B, SMARCA2/BRM, SMARCA4/BRG1/BAF190A, ACTL6A/BAF53, ACTL6B/BAF53B, SMARCE1/BAF57, SMARCC1/BAF155, SMARCC2/BAF170, SMARCB1/SNF5/INI1, and one or more SMARCD1/BAF60A, SMARCD2/BAF60B, or SMARCD3/BAF60C. In muscle cells, the BAF complex also contains DPF3. Component of neural progenitors-specific chromatin remodeling complex (npBAF complex) composed of at least, ARID1A/BAF250A or ARID1B/BAF250B, SMARCD1/BAF60A, SMARCD3/BAF60C, SMARCA2/BRM/BAF190B, SMARCA4/BRG1/BAF190A, SMARCB1/BAF47, SMARCC1/BAF155, SMARCE1/BAF57, SMARCC2/BAF170, PHF10/BAF45A, ACTL6A/BAF53A and actin. Component of neuron-specific chromatin remodeling complex (nBAF complex) composed of at least, ARID1A/BAF250A or ARID1B/BAF250B, SMARCD1/BAF60A, SMARCD3/BAF60C, SMARCA2/BRM/BAF190B, SMARCA4/BRG1/BAF190A, SMARCB1/BAF47, SMARCC1/BAF155, SMARCE1/BAF57, SMARCC2/BAF170, DPF1/BAF45B, DPF3/BAF45C, ACTL6B/BAF53B and actin. Component of a SWI/SNF-like EBAFa complex, at least composed of SMARCA4/BRG1/BAF190A, SMARCB1/BAF47/SNF5, ACTL6A/BAF53A, SMARCE1/BAF57, SMARCD1/BAF60A, SMARCC1/BAF155, SMARCC2/BAF170, BAF250A and MLLT1/ENL. Interacts through its C-terminus with SMARCA2/BRM/BAF190B and SMARCA4/BRG1/BAF190A. Interacts with SMARCC1/BAF155. Interacts with FOS, FOSB isoform 1 and 2, FOSL1 and FOSL2. As to expression, highly expressed in spleen, thymus, prostate, testis, ovary, small intestine, colon, and PBL, and at a much lower level in heart, brain, placenta, lung, liver, skeletal muscle, kidney, and pancreas.

It localises to the nucleus. Its function is as follows. Involved in transcriptional activation and repression of select genes by chromatin remodeling (alteration of DNA-nucleosome topology). Component of SWI/SNF chromatin remodeling complexes that carry out key enzymatic activities, changing chromatin structure by altering DNA-histone contacts within a nucleosome in an ATP-dependent manner. Binds DNA non-specifically. Belongs to the neural progenitors-specific chromatin remodeling complex (npBAF complex) and the neuron-specific chromatin remodeling complex (nBAF complex). During neural development a switch from a stem/progenitor to a postmitotic chromatin remodeling mechanism occurs as neurons exit the cell cycle and become committed to their adult state. The transition from proliferating neural stem/progenitor cells to postmitotic neurons requires a switch in subunit composition of the npBAF and nBAF complexes. As neural progenitors exit mitosis and differentiate into neurons, npBAF complexes which contain ACTL6A/BAF53A and PHF10/BAF45A, are exchanged for homologous alternative ACTL6B/BAF53B and DPF1/BAF45B or DPF3/BAF45C subunits in neuron-specific complexes (nBAF). The npBAF complex is essential for the self-renewal/proliferative capacity of the multipotent neural stem cells. The nBAF complex along with CREST plays a role regulating the activity of genes essential for dendrite growth. This chain is AT-rich interactive domain-containing protein 1A (ARID1A), found in Homo sapiens (Human).